We begin with the raw amino-acid sequence, 549 residues long: Hydroxylamine reductase (549 aa).

[4Fe-4S] cluster is bound by residues C5, C8, C17, and C23. 8 residues coordinate hybrid [4Fe-2O-2S] cluster: H243, E267, C311, C403, C431, C456, E491, and K493. Residue C403 is modified to Cysteine persulfide.

This sequence belongs to the HCP family. The cofactor is [4Fe-4S] cluster. It depends on hybrid [4Fe-2O-2S] cluster as a cofactor.

The protein localises to the cytoplasm. The catalysed reaction is A + NH4(+) + H2O = hydroxylamine + AH2 + H(+). Catalyzes the reduction of hydroxylamine to form NH(3) and H(2)O. This is Hydroxylamine reductase from Desulfitobacterium hafniense (strain Y51).